Here is a 716-residue protein sequence, read N- to C-terminus: MDMSKKKSKRASPIESSQEEIAISTSKTATTEKPKKTKTTTKKKASQPSQEVVMETESEVEITTTTTSTSTTNNNNITTTSTSSQQSNGTLSSSSSPTIQSIPTTPISKYIPSLSQIGTPLSPNRAAQRLREKDELSLIHNRLKSALKKLESAETELEKKNQEYEELDQKHTATIKQLKQRSDQVEKQLIEEQNQNSDLTSNRNILENELKSKESVWKKEKDEILLKFQESINKLNQENSLAQSQLKSEIVSKEYEIDGLKSEINRLKDDLQYRIREGEEKSRKLLENEYNRFKGKEEEYNQLIVSKDEEIKKYKFELKEKEKSSNAMNKKENELNNLIQAHERQIEDMRDSINREWELKAAQMMEEHHARTIHLQQAVDSFNEEKERIKSQMETLNGQIEDINIKNNEYEDRIKEMNVLLSQKDNSIGELGVEIEESKKKMRKQMADLKSKDGQIALLQIEINTKDNKCNTLQTETNRLKSELYSITNQIDPEIPLDPEINSLKELVKGFEKTVDDRKRKRSKLQHEFNAAANQDQNGMTIEEQSSTSTTTTTSATGSSSSTSHLDNIDSSKLPTGPEQSELFNPDTVSFSLVDSNQEFIKLSVHGDMDNGLSISKWRLIVVKPDGSKSGFSFPDGIQPFKGIKSVTVWTGRPRPQGTPTENEFYWARTELWTSPVEGTIVKLVSPSEETTTVTLPADGIYQKPSSAGKSNCLIM.

Basic residues-rich tracts occupy residues 1-10 and 35-45; these read MDMSKKKSKR and KKTKTTTKKKA. Positions 1–107 are disordered; sequence MDMSKKKSKR…TIQSIPTTPI (107 aa). Positions 62–107 are enriched in low complexity; that stretch reads ITTTTTSTSTTNNNNITTTSTSSQQSNGTLSSSSSPTIQSIPTTPI. Residues 130-450 adopt a coiled-coil conformation; sequence LREKDELSLI…KMRKQMADLK (321 aa). The IF rod domain occupies 132 to 515; the sequence is EKDELSLIHN…ELVKGFEKTV (384 aa). Positions 519 to 522 match the Nuclear localization signal motif; the sequence is KRKR. The interval 519–584 is disordered; sequence KRKRSKLQHE…PTGPEQSELF (66 aa). The segment covering 532-545 has biased composition (polar residues); sequence AANQDQNGMTIEEQ. The span at 546–564 shows a compositional bias: low complexity; it reads SSTSTTTTTSATGSSSSTS. The span at 565–584 shows a compositional bias: polar residues; sequence HLDNIDSSKLPTGPEQSELF. Positions 575–698 constitute an LTD domain; the sequence is PTGPEQSELF…EETTTVTLPA (124 aa). The short motif at 713 to 716 is the CAAX motif element; that stretch reads CLIM.

It belongs to the intermediate filament family. In terms of assembly, homodimer. Lamin dimers then assemble into dimeric head-to-tail polymers. Ultimately, two head-to-tail polymers assemble laterally into a protofilament with a uniformly shaped rod of 3.5 nm in diameter.

It localises to the nucleus lamina. It is found in the nucleus envelope. The protein localises to the nucleus inner membrane. Its function is as follows. Lamins are intermediate filament proteins that assemble into a filamentous meshwork, and which constitute the major components of the nuclear lamina, a fibrous layer on the nucleoplasmic side of the inner nuclear membrane. Lamins provide a framework for the nuclear envelope, bridging the nuclear envelope and chromatin, thereby playing an important role in nuclear assembly, chromatin organization, nuclear membrane and telomere dynamics. The structural integrity of the lamina is strictly controlled by the cell cycle, as seen by the disintegration and formation of the nuclear envelope in prophase and telophase, respectively. Helps to maintain integrity of nuclear structures in response to mechanical stress. The protein is Lamin-like protein of Dictyostelium discoideum (Social amoeba).